A 187-amino-acid polypeptide reads, in one-letter code: Flavin-dependent monooxygenase, reductase subunit HsaB (187 aa).

FAD contacts are provided by residues 32–36 (PVGFA), 38–39 (QS), 53–55 (CPT), 59–60 (RS), and 85–86 (RF). Residue 152–155 (FYRG) participates in NAD(+) binding.

Belongs to the non-flavoprotein flavin reductase family. In terms of assembly, hsaAB monooxygenase consists of an oxygenase component HsaA and a reductase component HsaB.

It carries out the reaction a reduced flavin + NAD(+) = an oxidized flavin + NADH + 2 H(+). It functions in the pathway lipid metabolism; steroid biosynthesis. In terms of biological role, catalyzes the reduction of free flavins (FMN or FAD) by NADH. Subsequently, the reduced flavins diffuse to the HsaA oxygenase subunit. In Mycobacterium tuberculosis (strain CDC 1551 / Oshkosh), this protein is Flavin-dependent monooxygenase, reductase subunit HsaB (hsaB).